The sequence spans 209 residues: MRTVVPFDPRDPKSRLAEFFADAEERRGFAYAMLADVLGAVRDAGGDPVVVATAPVSRPVDAPVTVDDRALSTAVAAAIADGPLPTAVVMADLALATPDAIRRVFAASGDVVLAPGSGGGTNVVLARTADVPVSYHGVSFRDHVTAAERAGLTVTTVDSFRLAADVDDASDLVDVFVHNTRRTREWLIAGGWRLAVDDGTPTVVREPND.

This sequence belongs to the CofC family. In terms of assembly, homodimer.

The catalysed reaction is (2S)-2-phospholactate + GTP + H(+) = (2S)-lactyl-2-diphospho-5'-guanosine + diphosphate. The protein operates within cofactor biosynthesis; coenzyme F420 biosynthesis. Its function is as follows. Guanylyltransferase that catalyzes the activation of (2S)-2-phospholactate (2-PL) as (2S)-lactyl-2-diphospho-5'-guanosine, via the condensation of 2-PL with GTP. It is involved in the biosynthesis of coenzyme F420, a hydride carrier cofactor. The protein is 2-phospho-L-lactate guanylyltransferase of Halobacterium salinarum (strain ATCC 29341 / DSM 671 / R1).